We begin with the raw amino-acid sequence, 334 residues long: Eukaryotic translation initiation factor 3 subunit H (334 aa).

The region spanning Val-20–Ala-152 is the MPN domain.

This sequence belongs to the eIF-3 subunit H family. As to quaternary structure, component of the eukaryotic translation initiation factor 3 (eIF-3) complex.

It is found in the cytoplasm. In terms of biological role, component of the eukaryotic translation initiation factor 3 (eIF-3) complex, which is involved in protein synthesis of a specialized repertoire of mRNAs and, together with other initiation factors, stimulates binding of mRNA and methionyl-tRNAi to the 40S ribosome. The eIF-3 complex specifically targets and initiates translation of a subset of mRNAs involved in cell proliferation. This chain is Eukaryotic translation initiation factor 3 subunit H, found in Anopheles gambiae (African malaria mosquito).